Reading from the N-terminus, the 197-residue chain is Imidazoleglycerol-phosphate dehydratase (197 aa).

It belongs to the imidazoleglycerol-phosphate dehydratase family.

The protein localises to the cytoplasm. It catalyses the reaction D-erythro-1-(imidazol-4-yl)glycerol 3-phosphate = 3-(imidazol-4-yl)-2-oxopropyl phosphate + H2O. It participates in amino-acid biosynthesis; L-histidine biosynthesis; L-histidine from 5-phospho-alpha-D-ribose 1-diphosphate: step 6/9. The chain is Imidazoleglycerol-phosphate dehydratase from Saccharophagus degradans (strain 2-40 / ATCC 43961 / DSM 17024).